The primary structure comprises 229 residues: Rhamnosyl O-methyltransferase (229 aa).

The signal sequence occupies residues 1–23 (MERVRQMFSCVSGMIYRPTDSIA).

It belongs to the rhamnosyl O-methyltransferase family.

Catalyzes the O-methylation of the hydroxyl group located on C-2 of the first rhamnosyl residue linked to the phenolic group of glycosylated phenolphthiocerol dimycocerosates (PGL) and p-hydroxybenzoic acid derivatives (p-HBAD). This is Rhamnosyl O-methyltransferase from Mycobacterium leprae (strain TN).